The sequence spans 232 residues: Large ribosomal subunit protein uL1 (232 aa).

It belongs to the universal ribosomal protein uL1 family. Part of the 50S ribosomal subunit.

Binds directly to 23S rRNA. The L1 stalk is quite mobile in the ribosome, and is involved in E site tRNA release. In terms of biological role, protein L1 is also a translational repressor protein, it controls the translation of the L11 operon by binding to its mRNA. This is Large ribosomal subunit protein uL1 from Rhizobium meliloti (strain 1021) (Ensifer meliloti).